The primary structure comprises 442 residues: Cyclic adenylate deaminase (442 aa).

The protein belongs to the metallo-dependent hydrolases superfamily. Adenosine and AMP deaminases family. Requires Zn(2+) as cofactor.

The enzyme catalyses 3',5'-cyclic AMP + H2O + H(+) = 3',5'-cyclic IMP + NH4(+). Its function is as follows. Deaminates cAMP into cIMP, thereby repressing cAMP dependent metabolism or genes. The polypeptide is Cyclic adenylate deaminase (add) (Leptospira interrogans serogroup Icterohaemorrhagiae serovar copenhageni (strain Fiocruz L1-130)).